A 312-amino-acid chain; its full sequence is NAD(P)(+)--arginine ADP-ribosyltransferase 1 (312 aa).

A signal peptide spans M1–A20. The propeptide occupies A21–G31. Cystine bridges form between C51–C260 and C159–C208. Positions I71–S256 constitute a TR mART core domain. Y108, R164, and Q183 together coordinate NAD(+). Residue R164 is part of the active site. S186 is a catalytic residue. Residue S217 participates in NAD(+) binding. E224 is an active-site residue. Positions G267 to V312 are excised as a propeptide.

The protein belongs to the Arg-specific ADP-ribosyltransferase family.

It localises to the secreted. The protein resides in the extracellular space. It catalyses the reaction L-arginyl-[protein] + NAD(+) = N(omega)-(ADP-D-ribosyl)-L-arginyl-[protein] + nicotinamide + H(+). In Gallus gallus (Chicken), this protein is NAD(P)(+)--arginine ADP-ribosyltransferase 1.